Reading from the N-terminus, the 277-residue chain is Large ribosomal subunit protein uL2 (277 aa).

Disordered regions lie at residues 34-55 and 213-277; these read LQPL…RHHG and WKGI…RKKK.

This sequence belongs to the universal ribosomal protein uL2 family. As to quaternary structure, part of the 50S ribosomal subunit. Forms a bridge to the 30S subunit in the 70S ribosome.

One of the primary rRNA binding proteins. Required for association of the 30S and 50S subunits to form the 70S ribosome, for tRNA binding and peptide bond formation. It has been suggested to have peptidyltransferase activity; this is somewhat controversial. Makes several contacts with the 16S rRNA in the 70S ribosome. The chain is Large ribosomal subunit protein uL2 from Staphylococcus haemolyticus (strain JCSC1435).